Here is a 25-residue protein sequence, read N- to C-terminus: Fructokinase-1 (25 aa).

The protein belongs to the ROK (NagC/XylR) family. As to quaternary structure, homodimer. Mg(2+) is required as a cofactor.

The enzyme catalyses D-fructose + ATP = D-fructose 6-phosphate + ADP + H(+). Inhibition by zinc ions (Potential). Inactivated by EDTA. The protein is Fructokinase-1 of Lactococcus lactis subsp. lactis (Streptococcus lactis).